The chain runs to 309 residues: Transcription termination/antitermination protein NusG (309 aa).

Disordered regions lie at residues 1–24 and 58–91; these read MSDP…ADDE and EGDH…VEAG. The span at 65–91 shows a compositional bias: acidic residues; sequence TDEDIEAGAVETDEDVETDTDEDVEAG.

It belongs to the NusG family.

Functionally, participates in transcription elongation, termination and antitermination. The protein is Transcription termination/antitermination protein NusG of Streptomyces galbus.